Consider the following 222-residue polypeptide: Chromatin-associated protein SWI6 (222 aa).

Over residues 1-15 (MPVIKKEELSQKKDL) the composition is skewed to basic and acidic residues. Disordered regions lie at residues 1 to 26 (MPVIKKEELSQKKDLESEEEDSGLED) and 77 to 147 (ETQD…DRQY). Positions 16 to 26 (ESEEEDSGLED) are enriched in acidic residues. Positions 28-87 (YEVEKVIKHRGKGKNIEFLVRWKGYGPEYDTWEPTENVASAEEAVAAYWETQDKTATAPR) constitute a Chromo domain.

In terms of assembly, interacts with DMT5.

It is found in the nucleus. Recognizes and binds histone H3 tails methylated at 'Lys-9', leading to epigenetic repression. Localizes DMT5 to heterochromatin characterized by trimethylation of histone H3 tails at 'Lys-9'. This Cryptococcus neoformans var. grubii serotype A (strain H99 / ATCC 208821 / CBS 10515 / FGSC 9487) (Filobasidiella neoformans var. grubii) protein is Chromatin-associated protein SWI6.